The following is a 223-amino-acid chain: Phosphoribosylformylglycinamidine synthase subunit PurQ (223 aa).

One can recognise a Glutamine amidotransferase type-1 domain in the interval 3–223; sequence FAVLVFPGSN…MVKSWREQHV (221 aa). The Nucleophile role is filled by Cys-85. Residues His-193 and Glu-195 contribute to the active site.

As to quaternary structure, part of the FGAM synthase complex composed of 1 PurL, 1 PurQ and 2 PurS subunits.

It localises to the cytoplasm. The catalysed reaction is N(2)-formyl-N(1)-(5-phospho-beta-D-ribosyl)glycinamide + L-glutamine + ATP + H2O = 2-formamido-N(1)-(5-O-phospho-beta-D-ribosyl)acetamidine + L-glutamate + ADP + phosphate + H(+). It carries out the reaction L-glutamine + H2O = L-glutamate + NH4(+). The protein operates within purine metabolism; IMP biosynthesis via de novo pathway; 5-amino-1-(5-phospho-D-ribosyl)imidazole from N(2)-formyl-N(1)-(5-phospho-D-ribosyl)glycinamide: step 1/2. Part of the phosphoribosylformylglycinamidine synthase complex involved in the purines biosynthetic pathway. Catalyzes the ATP-dependent conversion of formylglycinamide ribonucleotide (FGAR) and glutamine to yield formylglycinamidine ribonucleotide (FGAM) and glutamate. The FGAM synthase complex is composed of three subunits. PurQ produces an ammonia molecule by converting glutamine to glutamate. PurL transfers the ammonia molecule to FGAR to form FGAM in an ATP-dependent manner. PurS interacts with PurQ and PurL and is thought to assist in the transfer of the ammonia molecule from PurQ to PurL. This is Phosphoribosylformylglycinamidine synthase subunit PurQ from Staphylococcus aureus (strain USA300).